The chain runs to 131 residues: uncharacterized protein (131 aa).

This is an uncharacterized protein from Acanthamoeba polyphaga (Amoeba).